The sequence spans 87 residues: Venom serine protease inhibitor (87 aa).

Positions Met-1–Ala-23 are cleaved as a signal peptide. Disulfide bonds link Cys-27–Cys-61, Cys-36–Cys-57, Cys-40–Cys-53, Cys-44–Cys-81, and Cys-63–Cys-75. Positions Cys-27 to Cys-81 constitute a TIL domain.

This sequence belongs to the serine protease inhibitor-like (TIL domain-containing) family. In terms of tissue distribution, specifically expressed by the venom gland.

The protein localises to the secreted. Functionally, antifibrinolytic and antimicrobial serine protease inhibitor. Inhibits trypsin, plasmin and microbial serine proteases but not chymotrypsin, thrombin and elastase. Inhibits the plasmin-mediated degradation of fibrin to fibrin degradation products. Also binds to bacterial and fungal surfaces and exhibits antimicrobial activity against fungi as well as Gram-positive and Gram-negative bacteria. This chain is Venom serine protease inhibitor, found in Apis cerana (Indian honeybee).